The chain runs to 231 residues: Probable glutathione S-transferase GSTU1 (231 aa).

A GST N-terminal domain is found at 5–84 (KELVLLDFWV…YLDDAFPGTP (80 aa)). Glutathione is bound by residues Ser15, Lys42, Ile56, and 68-69 (ES). Residues 97-220 (AAYARATARF…LPSPEKVYDF (124 aa)) enclose the GST C-terminal domain.

It belongs to the GST superfamily. Tau family.

The catalysed reaction is RX + glutathione = an S-substituted glutathione + a halide anion + H(+). Functionally, conjugation of reduced glutathione to a wide number of exogenous and endogenous hydrophobic electrophiles. In Oryza sativa subsp. japonica (Rice), this protein is Probable glutathione S-transferase GSTU1 (GSTU1).